Consider the following 396-residue polypeptide: Calreticulin (396 aa).

The signal sequence occupies residues Met-1–Ala-15. Cys-101 and Cys-133 are joined by a disulfide. Tyr-105, Lys-107, Tyr-124, and Asp-131 together coordinate an alpha-D-glucoside. 7 repeat units span residues Ala-186 to Leu-197, Asp-205 to Glu-216, Asp-222 to Lys-233, Asp-239 to Asp-250, Gly-254 to Pro-264, Gly-268 to Pro-278, and Gly-282 to Pro-292. The tract at residues Ala-186–Asp-250 is 4 X approximate repeats. The interval Glu-193–Tyr-301 is P-domain. Basic and acidic residues predominate over residues Lys-202–Glu-212. A disordered region spans residues Lys-202–Asp-250. The segment covering Asp-213–Glu-224 has biased composition (acidic residues). Over residues Asp-225–Glu-246 the composition is skewed to basic and acidic residues. Residues Gly-254 to Pro-292 are 3 X approximate repeats. Residues Leu-302 to Leu-396 are C-domain. Asp-312 contacts an alpha-D-glucoside. Over residues Phe-342–Asp-380 the composition is skewed to basic and acidic residues. The segment at Phe-342 to Leu-396 is disordered. A compositionally biased stretch (acidic residues) spans Asp-381–Leu-396. Positions His-393–Leu-396 match the Prevents secretion from ER motif.

This sequence belongs to the calreticulin family.

The protein localises to the endoplasmic reticulum lumen. Its function is as follows. Molecular calcium-binding chaperone promoting folding, oligomeric assembly and quality control in the ER via the calreticulin/calnexin cycle. This lectin may interact transiently with almost all of the monoglucosylated glycoproteins that are synthesized in the ER. Probably by controlling the folding of extracellular matrix protein unc-52/Perlecan, may play a role in the formation of fibrous organelles, a hemidesmosome-like structure attaching muscles to the epidermis. Protects dopaminergic neurons against oxidative stress-induced neurodegeneration. This is Calreticulin (crt-1) from Caenorhabditis briggsae.